We begin with the raw amino-acid sequence, 556 residues long: Glutamine--tRNA ligase (556 aa).

The 'HIGH' region signature appears at 34 to 44 (PEPNGYLHIGH). ATP-binding positions include 35–37 (EPN) and 41–47 (HIGHAKS). L-glutamine contacts are provided by Asp67 and Tyr212. ATP contacts are provided by residues Thr231, 261 to 262 (RL), and 269 to 271 (MSK). A 'KMSKS' region motif is present at residues 268–272 (VMSKR).

The protein belongs to the class-I aminoacyl-tRNA synthetase family. Monomer.

It localises to the cytoplasm. It carries out the reaction tRNA(Gln) + L-glutamine + ATP = L-glutaminyl-tRNA(Gln) + AMP + diphosphate. This chain is Glutamine--tRNA ligase, found in Vibrio cholerae serotype O1 (strain ATCC 39315 / El Tor Inaba N16961).